We begin with the raw amino-acid sequence, 242 residues long: MSGHSKWSTIKRKKAKIDSQRGKVFTKLSKEIIIAARNGGADPNGNMRLKAAIEKAKIANIPNDNIQRAIQKGAGGGDGANFEEFSYEGYGPGGIAILLNVATDNRNRTAGEVRHILSKHGGNLGETGCVNWMFDEKGIIIIDRSEVNMSEDDIMLAALEAGAEDVKVEDDSFEISTAPEDLQSVKTALIDQGIPVADADTTMVPQTTVKLQGEDAEKMNKMIELLEDNDDIQEVFTNYEEE.

It belongs to the TACO1 family.

The protein resides in the cytoplasm. In Desulforamulus reducens (strain ATCC BAA-1160 / DSM 100696 / MI-1) (Desulfotomaculum reducens), this protein is Probable transcriptional regulatory protein Dred_1658.